A 381-amino-acid polypeptide reads, in one-letter code: Dual-specificity RNA methyltransferase RlmN (381 aa).

E95 acts as the Proton acceptor in catalysis. A Radical SAM core domain is found at 101–347 (EDDRGTLCVS…TTVRKTRGDD (247 aa)). C108 and C352 are joined by a disulfide. Residues C115, C119, and C122 each contribute to the [4Fe-4S] cluster site. S-adenosyl-L-methionine is bound by residues 178–179 (GE), S210, 232–234 (SLH), and N309. C352 functions as the S-methylcysteine intermediate in the catalytic mechanism.

This sequence belongs to the radical SAM superfamily. RlmN family. Requires [4Fe-4S] cluster as cofactor.

It localises to the cytoplasm. The catalysed reaction is adenosine(2503) in 23S rRNA + 2 reduced [2Fe-2S]-[ferredoxin] + 2 S-adenosyl-L-methionine = 2-methyladenosine(2503) in 23S rRNA + 5'-deoxyadenosine + L-methionine + 2 oxidized [2Fe-2S]-[ferredoxin] + S-adenosyl-L-homocysteine. It catalyses the reaction adenosine(37) in tRNA + 2 reduced [2Fe-2S]-[ferredoxin] + 2 S-adenosyl-L-methionine = 2-methyladenosine(37) in tRNA + 5'-deoxyadenosine + L-methionine + 2 oxidized [2Fe-2S]-[ferredoxin] + S-adenosyl-L-homocysteine. In terms of biological role, specifically methylates position 2 of adenine 2503 in 23S rRNA and position 2 of adenine 37 in tRNAs. m2A2503 modification seems to play a crucial role in the proofreading step occurring at the peptidyl transferase center and thus would serve to optimize ribosomal fidelity. The polypeptide is Dual-specificity RNA methyltransferase RlmN (Bordetella petrii (strain ATCC BAA-461 / DSM 12804 / CCUG 43448)).